Reading from the N-terminus, the 658-residue chain is Threonine--tRNA ligase (658 aa).

The 63-residue stretch at 1-63 (MDQITITFPD…DDNASIDFVA (63 aa)) folds into the TGS domain. The interval 245 to 548 (DHRKLGRELD…LIEHYAGNFP (304 aa)) is catalytic. Residues Cys-341, His-392, and His-525 each contribute to the Zn(2+) site.

Belongs to the class-II aminoacyl-tRNA synthetase family. In terms of assembly, homodimer. Requires Zn(2+) as cofactor.

It localises to the cytoplasm. The catalysed reaction is tRNA(Thr) + L-threonine + ATP = L-threonyl-tRNA(Thr) + AMP + diphosphate + H(+). In terms of biological role, catalyzes the attachment of threonine to tRNA(Thr) in a two-step reaction: L-threonine is first activated by ATP to form Thr-AMP and then transferred to the acceptor end of tRNA(Thr). Also edits incorrectly charged L-seryl-tRNA(Thr). The polypeptide is Threonine--tRNA ligase (Rhodopseudomonas palustris (strain ATCC BAA-98 / CGA009)).